Reading from the N-terminus, the 1047-residue chain is Carbamoyl phosphate synthase arginine-specific large chain (1047 aa).

Residues 1–401 are carboxyphosphate synthetic domain; the sequence is MPKRTDIQSV…GLQKAVRSLE (401 aa). Positions 129, 169, 175, 176, 208, 210, 215, 241, 242, 243, 284, and 298 each coordinate ATP. Positions 133–327 constitute an ATP-grasp 1 domain; sequence RQLMHELHEP…IARMAAKLSL (195 aa). Residues Gln-284, Glu-298, and Asn-300 each coordinate Mg(2+). Mn(2+) contacts are provided by Gln-284, Glu-298, and Asn-300. The interval 402-549 is oligomerization domain; sequence IKTHGLSLPS…YSSWTGENDL (148 aa). The tract at residues 550–933 is carbamoyl phosphate synthetic domain; sequence LLPEKAKERV…AFRKAFAWGE (384 aa). In terms of domain architecture, ATP-grasp 2 spans 676 to 865; sequence YEFMRSVEVP…LITYTIDVLF (190 aa). Positions 712, 750, 756, 781, 782, 783, 784, 824, and 836 each coordinate ATP. The Mg(2+) site is built by Gln-824, Glu-836, and Asn-838. 3 residues coordinate Mn(2+): Gln-824, Glu-836, and Asn-838. Positions 934 to 1047 are allosteric domain; that stretch reads EQTPALFRKK…PFLLPDVVMN (114 aa). Positions 937 to 1047 constitute an MGS-like domain; that stretch reads PALFRKKGSV…PFLLPDVVMN (111 aa).

It belongs to the CarB family. As to quaternary structure, composed of two chains; the small (or glutamine) chain promotes the hydrolysis of glutamine to ammonia, which is used by the large (or ammonia) chain to synthesize carbamoyl phosphate. Tetramer of heterodimers (alpha,beta)4. Mg(2+) is required as a cofactor. Requires Mn(2+) as cofactor.

It catalyses the reaction hydrogencarbonate + L-glutamine + 2 ATP + H2O = carbamoyl phosphate + L-glutamate + 2 ADP + phosphate + 2 H(+). It carries out the reaction hydrogencarbonate + NH4(+) + 2 ATP = carbamoyl phosphate + 2 ADP + phosphate + 2 H(+). It participates in amino-acid biosynthesis; L-arginine biosynthesis; carbamoyl phosphate from bicarbonate: step 1/1. In terms of biological role, large subunit of the glutamine-dependent carbamoyl phosphate synthetase (CPSase). CPSase catalyzes the formation of carbamoyl phosphate from the ammonia moiety of glutamine, carbonate, and phosphate donated by ATP, constituting the first step of the biosynthetic pathway leading to arginine and/or urea. The large subunit (synthetase) binds the substrates ammonia (free or transferred from glutamine from the small subunit), hydrogencarbonate and ATP and carries out an ATP-coupled ligase reaction, activating hydrogencarbonate by forming carboxy phosphate which reacts with ammonia to form carbamoyl phosphate. The sequence is that of Carbamoyl phosphate synthase arginine-specific large chain from Halalkalibacterium halodurans (strain ATCC BAA-125 / DSM 18197 / FERM 7344 / JCM 9153 / C-125) (Bacillus halodurans).